A 173-amino-acid chain; its full sequence is Glutamyl-tRNA(Gln) amidotransferase subunit F, mitochondrial (173 aa).

The transit peptide at 1-15 (MSRFMIRAVFFRRYT) directs the protein to the mitochondrion.

This sequence belongs to the GatF family. Subunit of the heterotrimeric GatFAB amidotransferase (AdT) complex, composed of A, B and F subunits.

Its subcellular location is the mitochondrion inner membrane. The enzyme catalyses L-glutamyl-tRNA(Gln) + L-glutamine + ATP + H2O = L-glutaminyl-tRNA(Gln) + L-glutamate + ADP + phosphate + H(+). Its function is as follows. Allows the formation of correctly charged Gln-tRNA(Gln) through the transamidation of misacylated Glu-tRNA(Gln) in the mitochondria. The reaction takes place in the presence of glutamine and ATP through an activated gamma-phospho-Glu-tRNA(Gln). Required for proper protein synthesis within the mitochondrion. The protein is Glutamyl-tRNA(Gln) amidotransferase subunit F, mitochondrial of Candida glabrata (strain ATCC 2001 / BCRC 20586 / JCM 3761 / NBRC 0622 / NRRL Y-65 / CBS 138) (Yeast).